Reading from the N-terminus, the 226-residue chain is Protein FMP52-1, mitochondrial (226 aa).

The transit peptide at 1–43 (MSAFVLGSTGLVGLQILKVLDSSTAFKKVSTVSRRLPSVTSGK) directs the protein to the mitochondrion.

The protein belongs to the FMP52 family.

The protein localises to the mitochondrion outer membrane. The polypeptide is Protein FMP52-1, mitochondrial (FMP521) (Scheffersomyces stipitis (strain ATCC 58785 / CBS 6054 / NBRC 10063 / NRRL Y-11545) (Yeast)).